Reading from the N-terminus, the 886-residue chain is Microsomal triacylglycerol transfer protein (886 aa).

The first 27 residues, 1-27, serve as a signal peptide directing secretion; the sequence is MENKNKKCLRTLLLLALFLGLLEDGKT. The 624-residue stretch at 30–653 folds into the Vitellogenin domain; that stretch reads IAPNSQQIFK…SQASSFKLGI (624 aa). N-linked (GlcNAc...) asparagine glycosylation is found at asparagine 358, asparagine 484, asparagine 502, and asparagine 616.

It localises to the endoplasmic reticulum. Its subcellular location is the golgi apparatus. It catalyses the reaction a 1,2-diacyl-sn-glycero-3-phosphocholine(in) = a 1,2-diacyl-sn-glycero-3-phosphocholine(out). It carries out the reaction a 1,2-diacyl-sn-glycero-3-phosphoethanolamine(in) = a 1,2-diacyl-sn-glycero-3-phosphoethanolamine(out). In terms of biological role, catalyzes the transport of phospholipids such as phosphatidylethanolamine (1,2-diacyl-sn-glycero-3-phosphoethanolamine) and phosphatidylcholine (1,2-diacyl-sn-glycero-3-phosphocholine) between membranes. Required for the assembly and secretion of plasma lipoproteins that contain apolipoprotein B. This is Microsomal triacylglycerol transfer protein from Drosophila melanogaster (Fruit fly).